Consider the following 381-residue polypeptide: Putrescine N-methyltransferase 3 (381 aa).

Positions 21–81 (MNGYQNGTSK…TISHDNGNEL (61 aa)) are disordered. 2 stretches are compositionally biased toward polar residues: residues 23 to 39 (GYQN…QNGT) and 46 to 81 (HQNG…GNEL). Residues 92-329 (PGWFSEFSAL…GVIGYMLCST (238 aa)) form the PABS domain. S-adenosyl-L-methionine is bound by residues glutamine 123, glutamate 198, and 229–230 (DG). Aspartate 248 (proton acceptor) is an active-site residue. Residue tyrosine 317 coordinates S-adenosyl-L-methionine.

It belongs to the class I-like SAM-binding methyltransferase superfamily. Putrescine methyltransferase family. In terms of tissue distribution, predominantly expressed in roots.

It carries out the reaction putrescine + S-adenosyl-L-methionine = N-methylputrescine + S-adenosyl-L-homocysteine + H(+). It functions in the pathway alkaloid biosynthesis; nicotine biosynthesis. Involved in the biosynthesis of pyridine alkaloid natural products, leading mainly to the production of anabasine, anatabine, nicotine and nornicotine, effective deterrents against herbivores with antiparasitic and pesticide properties (neurotoxins); nornicotine serves as the precursor in the synthesis of the carcinogen compound N'-nitrosonornicotine (NNN). Methyltransferase that mediates the conversion of putrescine to N-methylputrescine. Promotes leaves ripening. The protein is Putrescine N-methyltransferase 3 of Nicotiana tabacum (Common tobacco).